Consider the following 80-residue polypeptide: MAKKAPAAPAFEQALSELEQIVVRLESGDLPLEEALSEFERGIRLARQGQQTLQQAEQRVKILLSDDQDAPLSPFNAEQE.

The protein belongs to the XseB family. Heterooligomer composed of large and small subunits.

Its subcellular location is the cytoplasm. The catalysed reaction is Exonucleolytic cleavage in either 5'- to 3'- or 3'- to 5'-direction to yield nucleoside 5'-phosphates.. Bidirectionally degrades single-stranded DNA into large acid-insoluble oligonucleotides, which are then degraded further into small acid-soluble oligonucleotides. In Edwardsiella ictaluri (strain 93-146), this protein is Exodeoxyribonuclease 7 small subunit.